Reading from the N-terminus, the 123-residue chain is Class II hydrophobin 2 (123 aa).

A signal peptide spans 1–16 (MRSFLVIATLAVGAFG). 4 disulfide bridges follow: Cys-22-Cys-70, Cys-32-Cys-61, Cys-33-Cys-45, and Cys-71-Cys-82.

The protein belongs to the cerato-ulmin hydrophobin family. Homodimer. Homodimers further self-assemble to form highly ordered films at water-air interfaces through intermolecular interactions.

It localises to the secreted. The protein localises to the cell wall. Its function is as follows. Aerial growth, conidiation, and dispersal of filamentous fungi in the environment rely upon a capability of their secreting small amphipathic proteins called hydrophobins (HPBs) with low sequence identity. Class I can self-assemble into an outermost layer of rodlet bundles on aerial cell surfaces, conferring cellular hydrophobicity that supports fungal growth, development and dispersal; whereas Class II form highly ordered films at water-air interfaces through intermolecular interactions but contribute nothing to the rodlet structure. Hyd2 is a class II hydrophobin that plays probably a role in intraspecific signaling or hyphal fusion. Not necessary for root adhesion and colonization. Might play an essential role since no deletion mutants could be obtained. This chain is Class II hydrophobin 2, found in Bionectria ochroleuca (Gliocladium roseum).